The sequence spans 490 residues: Nuclear transcription factor Y subunit beta (490 aa).

A disordered region spans residues 1-48; it reads MSGNEDFIYDDNSSSSISNQTDGGGGGGSSNNNSGGNANNNNNEGDRE. Low complexity predominate over residues 30–43; that stretch reads SNNNSGGNANNNNN. The DNA-binding element occupies 53–59; that stretch reads LPIANII. The interval 80-91 is subunit association domain (SAD); the sequence is VQDCVSEFISFI. Disordered regions lie at residues 139 to 195 and 221 to 264; these read EKNS…QQQQ and QQQQ…NQQY. Residues 181 to 195 show a composition bias toward low complexity; sequence QQQQQPPQVQQQQQQ. Residues 188–219 adopt a coiled-coil conformation; the sequence is QVQQQQQQQQQQQQQQLQQQQQLQQHQQQQLQ. Residues 269–307 are a coiled coil; sequence QQQQQQQQQQQQQQQQQQQQQQQQQQQQQQQQQQQQQVQ. 2 disordered regions span residues 325 to 370 and 399 to 490; these read NQQA…QHLQ and QFSN…PSTS. The segment covering 399-468 has biased composition (low complexity); it reads QFSNNNNNNN…GNSLHNSGNS (70 aa). Over residues 478-490 the composition is skewed to polar residues; the sequence is PYISTNPEYPSTS.

This sequence belongs to the NFYB/HAP3 subunit family. As to quaternary structure, heterotrimeric transcription factor composed of three components, nfyA, nfyB and nfyC. nfyB and nfyC must interact and dimerize for nfyA association and DNA binding.

The protein localises to the nucleus. In terms of biological role, component of the NF-Y/HAP transcription factor complex. The NF-Y complex stimulates the transcription of various genes by recognizing and binding to a CCAAT motif in promoters. The sequence is that of Nuclear transcription factor Y subunit beta (nfyB) from Dictyostelium discoideum (Social amoeba).